Consider the following 335-residue polypeptide: Glucokinase (335 aa).

11 to 16 (ADIGGT) lines the ATP pocket.

Belongs to the bacterial glucokinase family.

The protein localises to the cytoplasm. The catalysed reaction is D-glucose + ATP = D-glucose 6-phosphate + ADP + H(+). The protein is Glucokinase of Stenotrophomonas maltophilia (strain K279a).